We begin with the raw amino-acid sequence, 353 residues long: MSEPLKPRIDFAEPLKEEPTSAFKAQQTFSEAESRTFAPAAIDERPEDEGAAEAAVDAALRPKRSLWRKMVMGGLALFGASVVGQGVQWTMNAWQTQDWVALGGCAAGALIVGAGVGSVVTEWRRLWRLRQRAHERDEARELLHSHSVGKGRAFCEKLAQQAGIDQSHPALQRWYAAIHETQNDREIVGLYANLVQPVLDAQARREISRFAAESTLMIAVSPLALVDMAFIAWRNLRLINRIATLYGIELGYYSRLRLFRLVLLNIAFAGASELVREVGMDWMSQDLAARLSTRAAQGIGAGLLTARLGIKAMELCRPLPWIDNDKPRLGDFRRQLIGQLKETLQKSKSSPEK.

Residues methionine 1 to proline 19 show a composition bias toward basic and acidic residues. The segment at methionine 1–arginine 35 is disordered. At methionine 1 to lysine 69 the chain is on the periplasmic side. The chain crosses the membrane as a helical span at residues methionine 70–threonine 90. Topologically, residues methionine 91–tryptophan 99 are cytoplasmic. A helical membrane pass occupies residues valine 100–valine 120. At threonine 121–alanine 212 the chain is on the periplasmic side. Residues glutamate 213–tryptophan 233 form a helical membrane-spanning segment. The Cytoplasmic portion of the chain corresponds to arginine 234–lysine 353.

Belongs to the UPF0283 family.

Its subcellular location is the cell inner membrane. This Salmonella typhimurium (strain LT2 / SGSC1412 / ATCC 700720) protein is UPF0283 membrane protein YcjF (ycjF).